A 169-amino-acid polypeptide reads, in one-letter code: MLHAFERKMAGHGILMIFCTLLFGVGLWMHLVGGFEIIPGYILEFHVPGSPEGWARAHSGPALNGMMVIAVAFVLPSLGFADKKPHLLGNIIILDGWANVGFYFFSNFSPNRGLTFGPNHFGPGDIFSFLALAPAYLFGVLAMGALAVIGYQALKSVGSRKAVPHATAE.

A run of 4 helical transmembrane segments spans residues 13–33 (GILM…HLVG), 61–81 (PALN…LGFA), 85–105 (PHLL…FYFF), and 129–149 (FLAL…LAVI).

Its subcellular location is the membrane. The catalysed reaction is styrene oxide = 2-phenylacetaldehyde. The protein operates within aromatic compound metabolism. Its function is as follows. Epoxystyrene isomerase that catalyzes the second step in the aerobic styrene degradation pathway by converting epoxystyrene to phenylacetaldehyde. This chain is Styrene-oxide isomerase (styC), found in Pseudomonas fluorescens.